A 215-amino-acid polypeptide reads, in one-letter code: Adenylate kinase (215 aa).

10–15 (GAGKGT) serves as a coordination point for ATP. An NMP region spans residues 30-59 (STGDMFRAAIKEGTELGKQAKALMDQGKLV). Residues threonine 31, arginine 36, 57–59 (KLV), 85–88 (GFPR), and glutamine 92 contribute to the AMP site. Residues 122 to 159 (GRRVHQPSGRTYHIIYNPPKVAGQDDITGEELITRADD) are LID. Residues arginine 123 and 132-133 (TY) contribute to the ATP site. Residues arginine 156 and arginine 167 each contribute to the AMP site. An ATP-binding site is contributed by lysine 200.

This sequence belongs to the adenylate kinase family. Monomer.

Its subcellular location is the cytoplasm. It carries out the reaction AMP + ATP = 2 ADP. The protein operates within purine metabolism; AMP biosynthesis via salvage pathway; AMP from ADP: step 1/1. Catalyzes the reversible transfer of the terminal phosphate group between ATP and AMP. Plays an important role in cellular energy homeostasis and in adenine nucleotide metabolism. This chain is Adenylate kinase, found in Haemophilus ducreyi (strain 35000HP / ATCC 700724).